We begin with the raw amino-acid sequence, 204 residues long: LexA repressor (204 aa).

Residues 28 to 48 (RAEIAQELGFKSPNAAEEHLK) constitute a DNA-binding region (H-T-H motif). Catalysis depends on for autocatalytic cleavage activity residues serine 125 and lysine 162.

Belongs to the peptidase S24 family. Homodimer.

The catalysed reaction is Hydrolysis of Ala-|-Gly bond in repressor LexA.. Functionally, represses a number of genes involved in the response to DNA damage (SOS response), including recA and lexA. In the presence of single-stranded DNA, RecA interacts with LexA causing an autocatalytic cleavage which disrupts the DNA-binding part of LexA, leading to derepression of the SOS regulon and eventually DNA repair. In Pseudomonas aeruginosa (strain LESB58), this protein is LexA repressor.